Reading from the N-terminus, the 317-residue chain is Probable cell division protein WhiA (317 aa).

The segment at residues 281 to 314 (SLKELGQMLDPPVGKSGINHRLRRIEKIAEELRK) is a DNA-binding region (H-T-H motif).

This sequence belongs to the WhiA family.

Its function is as follows. Involved in cell division and chromosome segregation. The protein is Probable cell division protein WhiA of Clostridium novyi (strain NT).